The sequence spans 330 residues: Inactive serine protease 45 (330 aa).

The first 35 residues, 1–35 (MATSLRLLDAGPGSLRRWIPTCFAALLLLPPRPNL), serve as a signal peptide directing secretion. Positions 45–291 (VCGAPWWSDS…YTGWIKEQVS (247 aa)) constitute a Peptidase S1 domain. 4 cysteine pairs are disulfide-bonded: Cys75-Cys91, Cys172-Cys249, Cys207-Cys230, and Cys239-Cys267. The N-linked (GlcNAc...) asparagine glycan is linked to Asn272.

The protein belongs to the peptidase S1 family.

It localises to the secreted. This is Inactive serine protease 45 (Prss45) from Rattus norvegicus (Rat).